A 450-amino-acid chain; its full sequence is Glucose-6-phosphate isomerase (450 aa).

A Phosphothreonine modification is found at T38. E290 functions as the Proton donor in the catalytic mechanism. Active-site residues include H311 and K425.

The protein belongs to the GPI family.

It is found in the cytoplasm. It catalyses the reaction alpha-D-glucose 6-phosphate = beta-D-fructose 6-phosphate. It functions in the pathway carbohydrate biosynthesis; gluconeogenesis. Its pathway is carbohydrate degradation; glycolysis; D-glyceraldehyde 3-phosphate and glycerone phosphate from D-glucose: step 2/4. Catalyzes the reversible isomerization of glucose-6-phosphate to fructose-6-phosphate. The polypeptide is Glucose-6-phosphate isomerase (Bacillus licheniformis (strain ATCC 14580 / DSM 13 / JCM 2505 / CCUG 7422 / NBRC 12200 / NCIMB 9375 / NCTC 10341 / NRRL NRS-1264 / Gibson 46)).